A 55-amino-acid chain; its full sequence is UPF0391 membrane protein Neut_2351/Neut_2360 (55 aa).

2 helical membrane passes run 4–24 and 28–48; these read LAVV…TGVA and AEMA…FWVL.

This sequence belongs to the UPF0391 family.

It localises to the cell membrane. The polypeptide is UPF0391 membrane protein Neut_2351/Neut_2360 (Nitrosomonas eutropha (strain DSM 101675 / C91 / Nm57)).